The sequence spans 118 residues: Ribosome-binding factor A (118 aa).

Belongs to the RbfA family. In terms of assembly, monomer. Binds 30S ribosomal subunits, but not 50S ribosomal subunits or 70S ribosomes.

The protein localises to the cytoplasm. Functionally, one of several proteins that assist in the late maturation steps of the functional core of the 30S ribosomal subunit. Associates with free 30S ribosomal subunits (but not with 30S subunits that are part of 70S ribosomes or polysomes). Required for efficient processing of 16S rRNA. May interact with the 5'-terminal helix region of 16S rRNA. The sequence is that of Ribosome-binding factor A from Geobacter sulfurreducens (strain ATCC 51573 / DSM 12127 / PCA).